A 116-amino-acid chain; its full sequence is Protein TCL1B1 (116 aa).

The protein belongs to the TCL1 family.

This is Protein TCL1B1 (Tcl1b1) from Mus musculus (Mouse).